We begin with the raw amino-acid sequence, 215 residues long: MKRRAYISEVPFDEAGSDDRNIYLTFDDGPNPHCTGQILDVLAEHRVPATFFVLGGHVKDHPDLVRRVAAEGHLVANHTMTHPDLTACDSEAIEREIKETNEAIVSACPQVAVQHIRRYGAWNADVLSRSMNAGLRPVHWSIDPRDWSRPGVDSIVDAVLAAARPGAIVLLHDGCPPDEIGNCKLTGLRDQTLSALLAIIPALHSRGFSLRSLPQ.

In terms of domain architecture, NodB homology spans 20–211 (RNIYLTFDDG…ALHSRGFSLR (192 aa)). Aspartate 27 serves as the catalytic Proton acceptor. The a divalent metal cation site is built by histidine 78 and histidine 82. Histidine 172 serves as the catalytic Proton donor.

This sequence belongs to the polysaccharide deacetylase family.

The protein localises to the cytoplasm. In terms of biological role, is involved in generating a small heat-stable compound (Nod), an acylated oligomer of N-acetylglucosamine, that stimulates mitosis in various plant protoplasts. The protein is Chitooligosaccharide deacetylase (nodB) of Rhizobium leguminosarum bv. trifolii.